A 45-amino-acid polypeptide reads, in one-letter code: Large ribosomal subunit protein bL34 (45 aa).

Positions 1 to 10 (MTQRTLGGTN) are enriched in polar residues. Residues 1–45 (MTQRTLGGTNRKQKRTSGFRARMRKSNGRKVIQARRKKGRHRLSV) form a disordered region. Over residues 11–45 (RKQKRTSGFRARMRKSNGRKVIQARRKKGRHRLSV) the composition is skewed to basic residues.

The protein belongs to the bacterial ribosomal protein bL34 family.

This chain is Large ribosomal subunit protein bL34, found in Crocosphaera subtropica (strain ATCC 51142 / BH68) (Cyanothece sp. (strain ATCC 51142)).